A 232-amino-acid chain; its full sequence is MRKAGVWGLLWMLFIEEIQAAAEVFEEKCTLAEGQTLKVSCPTNTNIYSNSQKAWQRLKDNGEVQTLAITEGSSQVRVGKYFLEDIPSEGMLQIQMANLQVEDSGLYRCVILGPSDPIILFHPVRLVVTKNSLGTPASDEYPCQVSVQNPTPLPVTTKLRPRPRPRPKPVTQPIPTSADRLSSPGFTVTPTNVTHVNRAPGISIIIPAACGLLSKTLVFIGLFAVTHRSFAS.

An N-terminal signal peptide occupies residues Met1 to Ala20. In terms of domain architecture, Ig-like V-type spans Ala21–Arg125. Over Ala21–Ser203 the chain is Extracellular. Cys41 and Cys109 are disulfide-bonded. Positions Pro152–Phe186 are disordered. Asn192 carries an N-linked (GlcNAc...) asparagine glycan. A helical membrane pass occupies residues Ile204–Ala224. Residues Val225–Ser232 lie on the Cytoplasmic side of the membrane.

In terms of assembly, monomer. Homomultimer; when activated. Interacts with TYROBP/DAP12. Interacts with TLR4. As to expression, detected in bone marrow, tongue, lung, liver, thymus, spleen, jejunum, ileum and lymph nodes.

The protein resides in the cell membrane. Cell surface receptor that plays important roles in innate and adaptive immunity by amplifying inflammatory responses. Upon activation by various ligands such as PGLYRP1, HMGB1 or HSP70, multimerizes and forms a complex with transmembrane adapter TYROBP/DAP12. In turn, initiates a SYK-mediated cascade of tyrosine phosphorylation, activating multiple downstream mediators such as BTK, MAPK1, MAPK3 or phospholipase C-gamma. This cascade promotes the neutrophil- and macrophage-mediated release of pro-inflammatory cytokines and/or chemokines, as well as their migration and thereby amplifies inflammatory responses that are triggered by bacterial and fungal infections. By also promoting the amplification of inflammatory signals that are initially triggered by Toll-like receptor (TLR) and NOD-like receptor engagement, plays a major role in the pathophysiology of acute and chronic inflammatory diseases of different etiologies including septic shock and atherosclerosis. This chain is Triggering receptor expressed on myeloid cells 1 (TREM1), found in Bos taurus (Bovine).